Reading from the N-terminus, the 283-residue chain is Shikimate dehydrogenase (NADP(+)) (283 aa).

Residues 19–21 (SLS) and threonine 66 each bind shikimate. Residue lysine 70 is the Proton acceptor of the active site. Residues asparagine 91 and aspartate 106 each coordinate shikimate. Residues 129 to 133 (GAGGA), 153 to 158 (NRTPEK), and leucine 224 each bind NADP(+). Tyrosine 226 lines the shikimate pocket. Position 247 (glycine 247) interacts with NADP(+).

Belongs to the shikimate dehydrogenase family. In terms of assembly, homodimer.

The enzyme catalyses shikimate + NADP(+) = 3-dehydroshikimate + NADPH + H(+). The protein operates within metabolic intermediate biosynthesis; chorismate biosynthesis; chorismate from D-erythrose 4-phosphate and phosphoenolpyruvate: step 4/7. Functionally, involved in the biosynthesis of the chorismate, which leads to the biosynthesis of aromatic amino acids. Catalyzes the reversible NADPH linked reduction of 3-dehydroshikimate (DHSA) to yield shikimate (SA). The protein is Shikimate dehydrogenase (NADP(+)) of Methanothermobacter thermautotrophicus (strain ATCC 29096 / DSM 1053 / JCM 10044 / NBRC 100330 / Delta H) (Methanobacterium thermoautotrophicum).